A 495-amino-acid chain; its full sequence is MVSEITHKSYPLHFVLFPFMAQGHMIPMVDIARLLAQRGVKITIVTTPHNAARFENVLNRAIESGLPISIVQVKLPSQEAGLPEGNETFDSLVSMELLVPFFKSVNMLEEPVQKLFEEMSPQPSCIISDFCLPYTSKIAKKFNIPKILFHGMCCFCLLCMHVLRKNHEIVENLKSDKEHFVVPYFPDRVEFTRPQVPVATYVPGDWHEITGDMVEADKTSYGVIVNTCQELEPAYANDYKEARSGKAWTIGPVSLCNKVGADKAERGNKADIDQDECLKWLNSKEEGSVLYVCLGSICNLPLSQLKELGLGLEESQRPFIWVIRGWEKNKELLEWFSESGFEERIKDRGLLIKGWAPQMLILSHHSVGGFLTHCGWNSTLEGLTAGLPLLTWPLFADQFCNEKLAVQVLKAGVSAGVDQPMKWGEEEKIGVLVDKEGVKKAVEELMGESDDAKEIRRRAKELGELAHKAVEEGGSSHSNITSLLEDIMQLAQSNN.

His24 acts as the Proton acceptor in catalysis. His24 contacts an anthocyanidin. Asp129 functions as the Charge relay in the catalytic mechanism. Residues Ala356, Gln358, His373, Trp376, Asn377, Ser378, and Glu381 each contribute to the UDP-alpha-D-glucose site. Ala396 serves as a coordination point for an anthocyanidin. Residues Asp397 and Gln398 each contribute to the UDP-alpha-D-glucose site.

It belongs to the UDP-glycosyltransferase family.

The enzyme catalyses oleanolate + UDP-alpha-D-glucose = oleanolate 3-O-beta-D-glucoside + UDP + H(+). Catalyzes the transfer of a glucose (Glc) moiety from UDP-Glc to the C-3 position of the oleanane sapogenins oleanolate and hederagenin, and to the C-28 carboxylic group of the lupane sapogenin betulinate. The monoglucosylated hederagenin 3-O-beta-D-glucoside is a feeding deterrent of the yellow-striped flea beetle (Phyllotreta nemorum). This chain is UDP-glycosyltransferase 73C13, found in Barbarea vulgaris (Yellow rocket).